The following is a 336-amino-acid chain: Holliday junction branch migration complex subunit RuvB (336 aa).

The tract at residues Met-1 to Tyr-182 is large ATPase domain (RuvB-L). Residues Leu-21, Arg-22, Gly-63, Lys-66, Thr-67, Ser-68, Glu-129–Phe-131, Arg-172, Tyr-182, and Arg-219 contribute to the ATP site. Thr-67 contributes to the Mg(2+) binding site. The segment at Asn-183–Gly-253 is small ATPAse domain (RuvB-S). The segment at Glu-256–Phe-336 is head domain (RuvB-H). DNA is bound by residues Arg-310 and Arg-315.

This sequence belongs to the RuvB family. As to quaternary structure, homohexamer. Forms an RuvA(8)-RuvB(12)-Holliday junction (HJ) complex. HJ DNA is sandwiched between 2 RuvA tetramers; dsDNA enters through RuvA and exits via RuvB. An RuvB hexamer assembles on each DNA strand where it exits the tetramer. Each RuvB hexamer is contacted by two RuvA subunits (via domain III) on 2 adjacent RuvB subunits; this complex drives branch migration. In the full resolvosome a probable DNA-RuvA(4)-RuvB(12)-RuvC(2) complex forms which resolves the HJ.

It localises to the cytoplasm. The enzyme catalyses ATP + H2O = ADP + phosphate + H(+). In terms of biological role, the RuvA-RuvB-RuvC complex processes Holliday junction (HJ) DNA during genetic recombination and DNA repair, while the RuvA-RuvB complex plays an important role in the rescue of blocked DNA replication forks via replication fork reversal (RFR). RuvA specifically binds to HJ cruciform DNA, conferring on it an open structure. The RuvB hexamer acts as an ATP-dependent pump, pulling dsDNA into and through the RuvAB complex. RuvB forms 2 homohexamers on either side of HJ DNA bound by 1 or 2 RuvA tetramers; 4 subunits per hexamer contact DNA at a time. Coordinated motions by a converter formed by DNA-disengaged RuvB subunits stimulates ATP hydrolysis and nucleotide exchange. Immobilization of the converter enables RuvB to convert the ATP-contained energy into a lever motion, pulling 2 nucleotides of DNA out of the RuvA tetramer per ATP hydrolyzed, thus driving DNA branch migration. The RuvB motors rotate together with the DNA substrate, which together with the progressing nucleotide cycle form the mechanistic basis for DNA recombination by continuous HJ branch migration. Branch migration allows RuvC to scan DNA until it finds its consensus sequence, where it cleaves and resolves cruciform DNA. In Helicobacter pylori (strain ATCC 700392 / 26695) (Campylobacter pylori), this protein is Holliday junction branch migration complex subunit RuvB.